Reading from the N-terminus, the 190-residue chain is Interferon alpha-7 (190 aa).

The first 23 residues, 1–23, serve as a signal peptide directing secretion; it reads MARLCAFLMVLAVMSYWPTCCLG. 2 cysteine pairs are disulfide-bonded: Cys24–Cys122 and Cys52–Cys162. N-linked (GlcNAc...) asparagine glycosylation occurs at Asn101.

The protein belongs to the alpha/beta interferon family.

It is found in the secreted. Functionally, produced by macrophages, IFN-alpha have antiviral activities. Interferon stimulates the production of two enzymes: a protein kinase and an oligoadenylate synthetase. This is Interferon alpha-7 (Ifna7) from Mus musculus (Mouse).